Consider the following 277-residue polypeptide: PTS system sorbose-specific EIIC component (277 aa).

Transmembrane regions (helical) follow at residues Met1–Gly21, Ile92–Leu112, Phe133–Ile153, Val177–Ile197, and Tyr219–Val239. One can recognise a PTS EIIC type-4 domain in the interval Ile3–Val237.

The protein localises to the cell membrane. Its function is as follows. The phosphoenolpyruvate-dependent sugar phosphotransferase system (PTS), a major carbohydrate active transport system, catalyzes the phosphorylation of incoming sugar substrates concomitant with their translocation across the cell membrane. The enzyme II SorABCD PTS system is involved in L-sorbose transport. In Lacticaseibacillus casei (Lactobacillus casei), this protein is PTS system sorbose-specific EIIC component.